The chain runs to 419 residues: CinA-like protein (419 aa).

The protein belongs to the CinA family.

The polypeptide is CinA-like protein (Picosynechococcus sp. (strain ATCC 27264 / PCC 7002 / PR-6) (Agmenellum quadruplicatum)).